The primary structure comprises 148 residues: MKVILLQDVKKIGKKGDIIEASDGYARNFLFPRKLAQEASDANMHILNNKKENERKQKLAELEAAQKLAEELKGKEIKIKAKTGENGKLFGAITSKDVAELIREQYKIEIDKKKIVMDTIKLAGGYEIDIKLYPEVSTKMKVIIVPQE.

The protein belongs to the bacterial ribosomal protein bL9 family.

Its function is as follows. Binds to the 23S rRNA. The chain is Large ribosomal subunit protein bL9 from Clostridium beijerinckii (strain ATCC 51743 / NCIMB 8052) (Clostridium acetobutylicum).